The primary structure comprises 116 residues: Large ribosomal subunit protein bL17 (116 aa).

It belongs to the bacterial ribosomal protein bL17 family. In terms of assembly, part of the 50S ribosomal subunit. Contacts protein L32.

The protein is Large ribosomal subunit protein bL17 of Prochlorococcus marinus (strain MIT 9515).